The following is a 403-amino-acid chain: S-adenosylmethionine synthase (403 aa).

Residue H16 participates in ATP binding. D18 is a binding site for Mg(2+). E44 provides a ligand contact to K(+). L-methionine contacts are provided by E57 and Q110. Residues 110 to 120 are flexible loop; that stretch reads QSAHIAQGVDA. Residues 175–177, D253, 259–260, A276, and K280 contribute to the ATP site; these read DSK and RK. Position 253 (D253) interacts with L-methionine. K284 provides a ligand contact to L-methionine.

This sequence belongs to the AdoMet synthase family. In terms of assembly, homotetramer; dimer of dimers. Requires Mg(2+) as cofactor. The cofactor is K(+).

It localises to the cytoplasm. It carries out the reaction L-methionine + ATP + H2O = S-adenosyl-L-methionine + phosphate + diphosphate. The protein operates within amino-acid biosynthesis; S-adenosyl-L-methionine biosynthesis; S-adenosyl-L-methionine from L-methionine: step 1/1. Catalyzes the formation of S-adenosylmethionine (AdoMet) from methionine and ATP. The overall synthetic reaction is composed of two sequential steps, AdoMet formation and the subsequent tripolyphosphate hydrolysis which occurs prior to release of AdoMet from the enzyme. This is S-adenosylmethionine synthase from Erythrobacter litoralis (strain HTCC2594).